Here is a 345-residue protein sequence, read N- to C-terminus: MSLTYRDAGVDIDEGDRLVDLIKPHARPTLRPEVLGGIGGFGGLFALDVKKYREPVLVSGTDGVGTKLKVAFAADRHDTVGIDLVAMCVNDIAVVGAEPLFFLDYYATGKLSAEQGAQVVKGIAEGCRQAGCALIGGETAELPGFYERGEYDLAGFAVGCVDRPRIVDGTRVARGDVVIGIASSGLHSNGFSLARKALLERYPLDHRFDALGGRTLADALLEPTRIYAKDVLALLEQVPVRAFAHITGGGLPGNVPRTLPDGTRAVLEEQRWPRPAIFDLVEREGQVPRDEMYRTFNMGLGLVAVVAPGDEAAAHAALRARGLEAWTVGAIEAGGPGEATCEVVR.

It belongs to the AIR synthase family.

The protein resides in the cytoplasm. The enzyme catalyses 2-formamido-N(1)-(5-O-phospho-beta-D-ribosyl)acetamidine + ATP = 5-amino-1-(5-phospho-beta-D-ribosyl)imidazole + ADP + phosphate + H(+). It participates in purine metabolism; IMP biosynthesis via de novo pathway; 5-amino-1-(5-phospho-D-ribosyl)imidazole from N(2)-formyl-N(1)-(5-phospho-D-ribosyl)glycinamide: step 2/2. The sequence is that of Phosphoribosylformylglycinamidine cyclo-ligase from Anaeromyxobacter dehalogenans (strain 2CP-1 / ATCC BAA-258).